Here is a 91-residue protein sequence, read N- to C-terminus: Probable Thioredoxin (91 aa).

Residues 1–91 enclose the Glutaredoxin domain; sequence MVMMKLFTSP…LKGGEEYGAS (91 aa). Cys-12 and Cys-15 are oxidised to a cystine.

This sequence belongs to the glutaredoxin family.

The protein resides in the cytoplasm. In terms of biological role, acts to maintain redox homeostasis; functions as a protein disulfide reductase. The protein is Probable Thioredoxin of Archaeoglobus fulgidus (strain ATCC 49558 / DSM 4304 / JCM 9628 / NBRC 100126 / VC-16).